The sequence spans 365 residues: Protein RecA (365 aa).

Residue 73–80 (GPESSGKT) coordinates ATP.

Belongs to the RecA family.

Its subcellular location is the cytoplasm. Functionally, can catalyze the hydrolysis of ATP in the presence of single-stranded DNA, the ATP-dependent uptake of single-stranded DNA by duplex DNA, and the ATP-dependent hybridization of homologous single-stranded DNAs. It interacts with LexA causing its activation and leading to its autocatalytic cleavage. This chain is Protein RecA, found in Prochlorococcus marinus (strain MIT 9301).